A 553-amino-acid chain; its full sequence is Formate--tetrahydrofolate ligase (553 aa).

63–70 (TPAGEGKT) is a binding site for ATP.

This sequence belongs to the formate--tetrahydrofolate ligase family.

It catalyses the reaction (6S)-5,6,7,8-tetrahydrofolate + formate + ATP = (6R)-10-formyltetrahydrofolate + ADP + phosphate. Its pathway is one-carbon metabolism; tetrahydrofolate interconversion. This Oenococcus oeni (strain ATCC BAA-331 / PSU-1) protein is Formate--tetrahydrofolate ligase.